Consider the following 195-residue polypeptide: Imidazoleglycerol-phosphate dehydratase (195 aa).

This sequence belongs to the imidazoleglycerol-phosphate dehydratase family.

The protein localises to the cytoplasm. It catalyses the reaction D-erythro-1-(imidazol-4-yl)glycerol 3-phosphate = 3-(imidazol-4-yl)-2-oxopropyl phosphate + H2O. The protein operates within amino-acid biosynthesis; L-histidine biosynthesis; L-histidine from 5-phospho-alpha-D-ribose 1-diphosphate: step 6/9. The chain is Imidazoleglycerol-phosphate dehydratase from Geobacter metallireducens (strain ATCC 53774 / DSM 7210 / GS-15).